The sequence spans 232 residues: 5'-methylthioadenosine/S-adenosylhomocysteine nucleosidase (232 aa).

Glu12 functions as the Proton acceptor in the catalytic mechanism. Substrate contacts are provided by residues Gly78, Val153, and 174-175 (ME). The active-site Proton donor is the Asp198.

Belongs to the PNP/UDP phosphorylase family. MtnN subfamily.

It carries out the reaction S-adenosyl-L-homocysteine + H2O = S-(5-deoxy-D-ribos-5-yl)-L-homocysteine + adenine. The catalysed reaction is S-methyl-5'-thioadenosine + H2O = 5-(methylsulfanyl)-D-ribose + adenine. The enzyme catalyses 5'-deoxyadenosine + H2O = 5-deoxy-D-ribose + adenine. It participates in amino-acid biosynthesis; L-methionine biosynthesis via salvage pathway; S-methyl-5-thio-alpha-D-ribose 1-phosphate from S-methyl-5'-thioadenosine (hydrolase route): step 1/2. Functionally, catalyzes the irreversible cleavage of the glycosidic bond in both 5'-methylthioadenosine (MTA) and S-adenosylhomocysteine (SAH/AdoHcy) to adenine and the corresponding thioribose, 5'-methylthioribose and S-ribosylhomocysteine, respectively. Also cleaves 5'-deoxyadenosine, a toxic by-product of radical S-adenosylmethionine (SAM) enzymes, into 5-deoxyribose and adenine. This is 5'-methylthioadenosine/S-adenosylhomocysteine nucleosidase from Photobacterium profundum (strain SS9).